The chain runs to 428 residues: Histidine--tRNA ligase (428 aa).

It belongs to the class-II aminoacyl-tRNA synthetase family. As to quaternary structure, homodimer.

The protein resides in the cytoplasm. It carries out the reaction tRNA(His) + L-histidine + ATP = L-histidyl-tRNA(His) + AMP + diphosphate + H(+). This Lactobacillus delbrueckii subsp. bulgaricus (strain ATCC BAA-365 / Lb-18) protein is Histidine--tRNA ligase.